A 250-amino-acid polypeptide reads, in one-letter code: V-type proton ATPase subunit D (250 aa).

The protein belongs to the V-ATPase D subunit family. As to quaternary structure, V-ATPase is a heteromultimeric enzyme made up of two complexes: the ATP-hydrolytic V1 complex and the proton translocation V0 complex. The V1 complex consists of three catalytic AB heterodimers that form a heterohexamer, three peripheral stalks each consisting of EG heterodimers, one central rotor including subunits D and F, and the regulatory subunits C and H. The proton translocation complex V0 consists of the proton transport subunit a, a ring of proteolipid subunits c9c'', rotary subunit d, subunits e and f, and two accessory subunits ATP6AP1/Ac45 and ATP6AP2/PRR.

Functionally, subunit of the V1 complex of vacuolar(H+)-ATPase (V-ATPase), a multisubunit enzyme composed of a peripheral complex (V1) that hydrolyzes ATP and a membrane integral complex (V0) that translocates protons. V-ATPase is responsible for acidifying and maintaining the pH of intracellular compartments and in some cell types, is targeted to the plasma membrane, where it is responsible for acidifying the extracellular environment. The protein is V-type proton ATPase subunit D (VATPD) of Suberites domuncula (Sponge).